A 24-amino-acid chain; its full sequence is Chaperonin GroEL (24 aa).

This sequence belongs to the chaperonin (HSP60) family. As to quaternary structure, forms a cylinder of 14 subunits composed of two heptameric rings stacked back-to-back. Interacts with the co-chaperonin GroES.

The protein localises to the cytoplasm. It carries out the reaction ATP + H2O + a folded polypeptide = ADP + phosphate + an unfolded polypeptide.. Its function is as follows. Together with its co-chaperonin GroES, plays an essential role in assisting protein folding. The GroEL-GroES system forms a nano-cage that allows encapsulation of the non-native substrate proteins and provides a physical environment optimized to promote and accelerate protein folding. The protein is Chaperonin GroEL of Acinetobacter calcoaceticus.